The chain runs to 368 residues: Zinc finger protein 24 (368 aa).

A Glycyl lysine isopeptide (Lys-Gly) (interchain with G-Cter in SUMO2) cross-link involves residue K22. K27 participates in a covalent cross-link: Glycyl lysine isopeptide (Lys-Gly) (interchain with G-Cter in SUMO1); alternate. Residue K27 forms a Glycyl lysine isopeptide (Lys-Gly) (interchain with G-Cter in SUMO2); alternate linkage. Residues 52–134 (RQRFRQFGYQ…TVLEDLESEL (83 aa)) enclose the SCAN box domain. S132 and S142 each carry phosphoserine. Residues K147, K177, and K236 each participate in a glycyl lysine isopeptide (Lys-Gly) (interchain with G-Cter in SUMO2) cross-link. The segment at 251-273 (HICDECGKHFSQGSALILHQRIH) adopts a C2H2-type 1 zinc-finger fold. The segment at 251-301 (HICDECGKHFSQGSALILHQRIHSGEKPYGCVECGKAFSRSSILVQHQRVH) is necessary and sufficient for nuclear localization. At S274 the chain carries Phosphoserine. Residues K277 and K286 each participate in a glycyl lysine isopeptide (Lys-Gly) (interchain with G-Cter in SUMO2) cross-link. 3 consecutive C2H2-type zinc fingers follow at residues 279 to 301 (YGCV…QRVH), 307 to 329 (YKCL…QRIH), and 335 to 357 (YECV…QRRH). S292 carries the post-translational modification Phosphoserine. Y335 is subject to Phosphotyrosine. Glycyl lysine isopeptide (Lys-Gly) (interchain with G-Cter in SUMO2) cross-links involve residues K361 and K367.

The protein belongs to the krueppel C2H2-type zinc-finger protein family. Post-translationally, sumoylated. Expressed in many tissues except in heart.

Its subcellular location is the nucleus. Transcription factor required for myelination of differentiated oligodendrocytes. Required for the conversion of oligodendrocytes from the premyelinating to the myelinating state. In the developing central nervous system (CNS), involved in the maintenance in the progenitor stage by promoting the cell cycle. Specifically binds to the 5'-TCAT-3' DNA sequence. Has transcription repressor activity in vitro. The sequence is that of Zinc finger protein 24 (ZNF24) from Homo sapiens (Human).